The primary structure comprises 402 residues: Centromere protein C (402 aa).

Lys1 participates in a covalent cross-link: Glycyl lysine isopeptide (Lys-Gly) (interchain with G-Cter in SUMO2). Positions 1-12 (KSEQSSFSSSSS) are enriched in low complexity. Residues 1 to 118 (KSEQSSFSSS…HQKSQMSVET (118 aa)) are disordered. Ser5 is subject to Phosphoserine. Residues 25 to 42 (QKPPAEKTNQSSKNIGKK) carry the Nuclear localization signal motif. A compositionally biased stretch (basic residues) spans 44-53 (APFKKQKRAN). The segment covering 88–118 (PNPSGDTGSSKNQDSMAAQNVHQKSQMSVET) has biased composition (polar residues). Residue Lys186 forms a Glycyl lysine isopeptide (Lys-Gly) (interchain with G-Cter in SUMO2) linkage. Thr193 bears the Phosphothreonine mark. Residues 196 to 218 (VRRTMRTRSKPLEYWRGERIDYQ) are MIF2 homology domain II. Ser222 and Ser232 each carry phosphoserine. The Nuclear localization signal motif lies at 239 to 257 (KRKAKGNLGRIITTANRKR). Lys266 is covalently cross-linked (Glycyl lysine isopeptide (Lys-Gly) (interchain with G-Cter in SUMO2)). Residues 349–402 (LVFYVNLGYLLCTLHETPYIVTTGDSFYVPSGNYYNIKNLLNEERVLLFTQIKS) form an MIF2 homology domain III region.

It belongs to the CENP-C/MIF2 family. In terms of assembly, oligomer. Component of the CENPA-NAC complex, at least composed of CENPA, CENPC, CENPH, CENPM, CENPN, CENPT and CENPU. The CENPA-NAC complex interacts with the CENPA-CAD complex, composed of CENPI, CENPK, CENPL, CENPO, CENPP, CENPQ, CENPR and CENPS. Binds to DAXX. Interacts with DNMT3B. Interacts directly with CENPA. Identified in a centromere complex containing histones H2A, H2B and H4, and at least CENPA, CENPB, CENPC, CENPT, CENPN, HJURP, SUPT16H, SSRP1 and RSF1. Interacts with MEIKIN.

The protein localises to the nucleus. The protein resides in the chromosome. It is found in the centromere. Its subcellular location is the kinetochore. Functionally, component of the CENPA-NAC (nucleosome-associated) complex, a complex that plays a central role in assembly of kinetochore proteins, mitotic progression and chromosome segregation. The CENPA-NAC complex recruits the CENPA-CAD (nucleosome distal) complex and may be involved in incorporation of newly synthesized CENPA into centromeres. CENPC recruits DNA methylation and DNMT3B to both centromeric and pericentromeric satellite repeats and regulates the histone code in these regions. The sequence is that of Centromere protein C (CENPC) from Ovis aries (Sheep).